Reading from the N-terminus, the 295-residue chain is Protease HtpX (295 aa).

The next 2 helical transmembrane spans lie at 4–24 and 42–62; these read ILLFLATNLAVVLIASITLSL and QLLVFCAVFGFAGSLFSLFIS. Position 147 (His147) interacts with Zn(2+). Residue Glu148 is part of the active site. Position 151 (His151) interacts with Zn(2+). Helical transmembrane passes span 158-178 and 199-219; these read VTLALVQGVVNTFVMFFARII and ITTIFAELVLGFLASAIVMWF. Residue Glu224 coordinates Zn(2+).

This sequence belongs to the peptidase M48B family. Zn(2+) is required as a cofactor.

It localises to the cell inner membrane. The protein is Protease HtpX of Pseudomonas savastanoi pv. phaseolicola (strain 1448A / Race 6) (Pseudomonas syringae pv. phaseolicola (strain 1448A / Race 6)).